Here is a 232-residue protein sequence, read N- to C-terminus: Putative N-acetylmannosamine-6-phosphate 2-epimerase (232 aa).

This sequence belongs to the NanE family.

The enzyme catalyses an N-acyl-D-glucosamine 6-phosphate = an N-acyl-D-mannosamine 6-phosphate. It functions in the pathway amino-sugar metabolism; N-acetylneuraminate degradation; D-fructose 6-phosphate from N-acetylneuraminate: step 3/5. Its function is as follows. Converts N-acetylmannosamine-6-phosphate (ManNAc-6-P) to N-acetylglucosamine-6-phosphate (GlcNAc-6-P). The chain is Putative N-acetylmannosamine-6-phosphate 2-epimerase from Proteus mirabilis (strain HI4320).